The chain runs to 261 residues: Eukaryotic translation initiation factor 3 subunit J-A (261 aa).

Residues 1-11 are compositionally biased toward low complexity; that stretch reads MAAAAAAAAAA. A disordered region spans residues 1–113; sequence MAAAAAAAAA…EPEESKVLTP (113 aa). The interval 4–72 is sufficient for interaction with EIF3B; the sequence is AAAAAAAAGD…KEEAEVKPEV (69 aa). 3 positions are modified to phosphoserine: serine 14, serine 16, and serine 23. A compositionally biased stretch (acidic residues) spans 43–64; it reads EGEDEDEDVKDNWDDDDDENKE. Residues 65–109 are compositionally biased toward basic and acidic residues; it reads EAEVKPEVKISEKKKIAEKIKEKERQQKKRQEEIKKRLEEPEESK. Residues 73 to 138 are a coiled coil; that stretch reads KISEKKKIAE…ESDLELAKET (66 aa). Residue lysine 109 forms a Glycyl lysine isopeptide (Lys-Gly) (interchain with G-Cter in SUMO2) linkage. Threonine 112 carries the phosphothreonine modification. At serine 130 the chain carries Phosphoserine. Residues 246–261 form a promotes stable association with the 40S ribosome region; that stretch reads YGGYEGGYVQDYEDFM. Tyrosine 257 is subject to Phosphotyrosine.

The protein belongs to the eIF-3 subunit J family. In terms of assembly, component of the eukaryotic translation initiation factor 3 (eIF-3) complex, which is composed of 13 subunits: EIF3A, EIF3B, EIF3C, EIF3D, EIF3E, EIF3F, EIF3G, EIF3H, EIF3I, EIF3J, EIF3K, EIF3L and EIF3M. The eIF-3 complex appears to include 3 stable modules: module A is composed of EIF3A, EIF3B, EIF3G and EIF3I; module B is composed of EIF3F, EIF3H, and EIF3M; and module C is composed of EIF3C, EIF3D, EIF3E, EIF3K and EIF3L. EIF3C of module C binds EIF3B of module A and EIF3H of module B, thereby linking the three modules. EIF3J is a labile subunit that binds to the eIF-3 complex via EIF3B. The eIF-3 complex interacts with RPS6KB1 under conditions of nutrient depletion. Mitogenic stimulation leads to binding and activation of a complex composed of MTOR and RPTOR, leading to phosphorylation and release of RPS6KB1 and binding of EIF4B to eIF-3. Phosphorylated. Phosphorylation is enhanced upon serum stimulation.

Its subcellular location is the cytoplasm. In terms of biological role, component of the eukaryotic translation initiation factor 3 (eIF-3) complex, which is required for several steps in the initiation of protein synthesis. The eIF-3 complex associates with the 40S ribosome and facilitates the recruitment of eIF-1, eIF-1A, eIF-2:GTP:methionyl-tRNAi and eIF-5 to form the 43S pre-initiation complex (43S PIC). The eIF-3 complex stimulates mRNA recruitment to the 43S PIC and scanning of the mRNA for AUG recognition. The eIF-3 complex is also required for disassembly and recycling of post-termination ribosomal complexes and subsequently prevents premature joining of the 40S and 60S ribosomal subunits prior to initiation. The eIF-3 complex specifically targets and initiates translation of a subset of mRNAs involved in cell proliferation, including cell cycling, differentiation and apoptosis, and uses different modes of RNA stem-loop binding to exert either translational activation or repression. This subunit binds directly within the mRNA entry channel of the 40S ribosome to the aminoacyl (A) site. It may regulate the interaction between the 43S PIC and mRNA. The polypeptide is Eukaryotic translation initiation factor 3 subunit J-A (Eif3j1) (Mus musculus (Mouse)).